A 710-amino-acid chain; its full sequence is uncharacterized protein (710 aa).

Residues 1-40 form a disordered region; that stretch reads MSESDGAFKSPSLPPSHHAPAPMSPEKIRAPAEQMDGPVE. The segment covering 15–25 has biased composition (low complexity); that stretch reads PSHHAPAPMSP. An FHA domain is found at 108–165; that stretch reads VVIGRIKPGCDLLMEHPSISRYHCILQYGNDKMSKTGKGWHIFELGSTHGSRMNKKRL. Coiled-coil stretches lie at residues 206–240, 409–440, and 471–502; these read TEMKLRKHKKELEAKLRAAAAQEMIDDEKREKEEE, ETDTYESLCRKLEESKKEIIECQKHLDELSAG, and AKTKMEKSKWRQKLMAATHESQKLEKLVKIAK. The disordered stretch occupies residues 230 to 250; that stretch reads IDDEKREKEEEGCGWGMDYGE. Disordered stretches follow at residues 535–560, 591–619, and 671–710; these read EIDQTPSQGPGPSTSATLPATVAPTS, KNSLPAVDEPSSVKDEVSEETPQKEAFGS, and EDYGAGVEDRDEKYSTWMPPNADQSEAKQDALRAKFAGRY. Positions 538–560 are enriched in polar residues; it reads QTPSQGPGPSTSATLPATVAPTS. The stretch at 613 to 661 forms a coiled coil; that stretch reads QKEAFGSKVQKRVAQWEEELEAEKEELAKKQKLEAEEEAKKKVQRVRRR.

This is an uncharacterized protein from Caenorhabditis elegans.